We begin with the raw amino-acid sequence, 329 residues long: Beta-ketoacyl-[acyl-carrier-protein] synthase III (329 aa).

Catalysis depends on residues Cys123 and His256. The ACP-binding stretch occupies residues 257–261 (QANVR). The active site involves Asn286.

It belongs to the thiolase-like superfamily. FabH family. Homodimer.

It is found in the cytoplasm. It carries out the reaction malonyl-[ACP] + acetyl-CoA + H(+) = 3-oxobutanoyl-[ACP] + CO2 + CoA. It functions in the pathway lipid metabolism; fatty acid biosynthesis. Its function is as follows. Catalyzes the condensation reaction of fatty acid synthesis by the addition to an acyl acceptor of two carbons from malonyl-ACP. Catalyzes the first condensation reaction which initiates fatty acid synthesis and may therefore play a role in governing the total rate of fatty acid production. Possesses both acetoacetyl-ACP synthase and acetyl transacylase activities. Its substrate specificity determines the biosynthesis of branched-chain and/or straight-chain of fatty acids. The polypeptide is Beta-ketoacyl-[acyl-carrier-protein] synthase III (Bordetella parapertussis (strain 12822 / ATCC BAA-587 / NCTC 13253)).